A 448-amino-acid polypeptide reads, in one-letter code: Multiple inositol polyphosphate phosphatase 1 (448 aa).

Residues 1–19 form the signal peptide; the sequence is MAPRRAACLLPLLVAVASA. The active site involves His-69. N-linked (GlcNAc...) asparagine glycosylation is found at Asn-203, Asn-257, Asn-409, and Asn-441. Residues 445-448 carry the Prevents secretion from ER motif; that stretch reads ADEL.

It belongs to the histidine acid phosphatase family. MINPP1 subfamily. N-glycosylated. As to expression, present in growth plate chondrocytes but not detectable in articular chondrocytes (at protein level). Spatially restricted to chondrocytes in the lower portion of the proliferative zone and the upper portion of the hypertrophic zone in the growth plate of long bones (at protein level). Weakly expressed in kidney, liver, lung, skin and spleen, and not detected in brain, heart and muscle.

It is found in the endoplasmic reticulum lumen. The protein resides in the secreted. It localises to the cell membrane. It catalyses the reaction 1D-myo-inositol hexakisphosphate + H2O = 1D-myo-inositol 1,2,4,5,6-pentakisphosphate + phosphate. The catalysed reaction is 1D-myo-inositol 1,2,4,5,6-pentakisphosphate + H2O = 1D-myo-inositol 1,2,5,6-tetrakisphosphate + phosphate. The enzyme catalyses 1D-myo-inositol 1,2,5,6-tetrakisphosphate + H2O = 1D-myo-inositol 1,2,6-trisphosphate + phosphate. It carries out the reaction 1D-myo-inositol 1,2,6-trisphosphate + H2O = 1D-myo-inositol 1,2-bisphosphate + phosphate. It catalyses the reaction 1D-myo-inositol 1,2-bisphosphate + H2O = 1D-myo-inositol 2-phosphate + phosphate. The catalysed reaction is 1D-myo-inositol hexakisphosphate + H2O = 1D-myo-inositol 1,2,3,5,6-pentakisphosphate + phosphate. The enzyme catalyses 1D-myo-inositol 1,2,3,5,6-pentakisphosphate + H2O = 1D-myo-inositol 1,2,3,6-tetrakisphosphate + phosphate. It carries out the reaction 1D-myo-inositol 1,2,3,6-tetrakisphosphate + H2O = 1D-myo-inositol 1,2,3-trisphosphate + phosphate. It catalyses the reaction 1D-myo-inositol 1,2,3-trisphosphate + H2O = 1D-myo-inositol 2,3-bisphosphate + phosphate. The catalysed reaction is 1D-myo-inositol 2,3-bisphosphate + H2O = 1D-myo-inositol 2-phosphate + phosphate. The enzyme catalyses 1D-myo-inositol 1,3,4,5,6-pentakisphosphate + H2O = 1D-myo-inositol 1,4,5,6-tetrakisphosphate + phosphate. It carries out the reaction 1D-myo-inositol 1,4,5,6-tetrakisphosphate + H2O = 1D-myo-inositol 1,4,5-trisphosphate + phosphate. It catalyses the reaction (2R)-2,3-bisphosphoglycerate + H2O = (2R)-2-phosphoglycerate + phosphate. In terms of biological role, multiple inositol polyphosphate phosphatase that hydrolyzes 1D-myo-inositol 1,3,4,5,6-pentakisphosphate (InsP5[2OH]) and 1D-myo-inositol hexakisphosphate (InsP6) to a range of less phosphorylated inositol phosphates. This regulates the availability of these various small molecule second messengers and metal chelators which control many aspects of cell physiology. Has a weak in vitro activity towards 1D-myo-inositol 1,4,5-trisphosphate which is unlikely to be physiologically relevant. By regulating intracellular inositol polyphosphates pools, which act as metal chelators, it may control the availability of intracellular calcium and iron, which are important for proper neuronal development and homeostasis. May have a dual substrate specificity, and function as a 2,3-bisphosphoglycerate 3-phosphatase hydrolyzing 2,3-bisphosphoglycerate to 2-phosphoglycerate. 2,3-bisphosphoglycerate (BPG) is formed as part of the Rapoport-Luebering glycolytic bypass and is a regulator of systemic oxygen homeostasis as the major allosteric effector of hemoglobin. The polypeptide is Multiple inositol polyphosphate phosphatase 1 (MINPP1) (Gallus gallus (Chicken)).